Reading from the N-terminus, the 811-residue chain is Potassium transporter 7 (811 aa).

The Cytoplasmic portion of the chain corresponds to 1–52; the sequence is MPSYQYLLSLLFYILDCTDRFSVIVTIHNHRVGVLMIVLLQDQWKSYCRTIS. A helical membrane pass occupies residues 53–73; that stretch reads LLAFQSFGVVYGDLSTSPLYV. The Extracellular portion of the chain corresponds to 74–93; sequence YKSAFSGRLNNYRDETTIFG. Residues 94–114 form a helical membrane-spanning segment; the sequence is LFSLIFWTLTLLPLLKYVIIV. The Cytoplasmic segment spans residues 115–181; it reads LNADDNGEGG…EKHRKLRTCL (67 aa). A helical transmembrane segment spans residues 182–202; sequence LLFVLFGACMVIGDGVFTPAI. Residues 203–217 lie on the Extracellular side of the membrane; that stretch reads SVLSAISGLKDPGPG. A helical membrane pass occupies residues 218–238; that stretch reads GIPDGWVVFIACIVLVGLFAL. Residues 239 to 245 lie on the Cytoplasmic side of the membrane; sequence QHRGTHR. Residues 246 to 266 traverse the membrane as a helical segment; it reads VAFMFAPIVVVWLLSIGVIGL. Residues 267–296 are Extracellular-facing; it reads YNIIHWNHRIFLALSPHYVIKFFKMTGKDG. Residues 297 to 317 traverse the membrane as a helical segment; it reads WLSLGGVLLAITGTEAMFADL. At 318–326 the chain is on the cytoplasmic side; the sequence is GHFTAASIR. The helical transmembrane segment at 327–347 threads the bilayer; it reads LAFVGAIYPCLVLQYMGQAAF. Topologically, residues 348-366 are extracellular; it reads LSRNMSAVEDSFYQSVPRS. N-linked (GlcNAc...) asparagine glycosylation is present at N351. The helical transmembrane segment at 367 to 387 threads the bilayer; sequence LFWPVFVIATLAAVVGSQSII. At 388-418 the chain is on the cytoplasmic side; it reads SATFSIVKQCLSLGCFPRVKVVHTSRWIHGQ. A helical membrane pass occupies residues 419–439; that stretch reads IYIPEINWILMVLCLAVTLGF. Residues 440–450 lie on the Extracellular side of the membrane; the sequence is RDTTVIGNAYG. A helical transmembrane segment spans residues 451–471; it reads LACIVVMFVTTWLMALVIIFV. The Cytoplasmic portion of the chain corresponds to 472-475; sequence WQKN. The chain crosses the membrane as a helical span at residues 476-496; it reads ILLALLFVVAFGSIEVVYLSA. At 497–503 the chain is on the extracellular side; the sequence is AVTKVPQ. Residues 504 to 524 form a helical membrane-spanning segment; sequence GGWAPIVFAFVFMLVMYVWHY. The Cytoplasmic segment spans residues 525–811; the sequence is GSRRKYLFDL…LVEVGMIYYV (287 aa). Positions 680 to 702 are disordered; it reads TGLVMRDSNNEASGTSLTRSSRS.

This sequence belongs to the HAK/KUP transporter (TC 2.A.72.3) family. In terms of tissue distribution, expressed in roots and shoots.

Its subcellular location is the membrane. Functionally, high-affinity potassium transporter. This chain is Potassium transporter 7 (HAK7), found in Oryza sativa subsp. japonica (Rice).